Reading from the N-terminus, the 268-residue chain is Type-5 uracil-DNA glycosylase (268 aa).

Residues 1–29 form a disordered region; sequence MHPKTGRAFRSPVEPGSGWPGDPATPQTP. Residues cysteine 57, cysteine 60, cysteine 161, and cysteine 176 each coordinate [4Fe-4S] cluster.

Belongs to the uracil-DNA glycosylase (UDG) superfamily. Type 5 (UDGb) family.

Its function is as follows. DNA glycosylase with broad substrate specificity. This Mycobacterium bovis (strain ATCC BAA-935 / AF2122/97) protein is Type-5 uracil-DNA glycosylase.